Consider the following 464-residue polypeptide: L-cysteine:1D-myo-inositol 2-amino-2-deoxy-alpha-D-glucopyranoside ligase (464 aa).

C67 is a binding site for Zn(2+). L-cysteinyl-5'-AMP contacts are provided by residues 67–70 (CGIT), T82, and 105–107 (NVT). The 'HIGH' region signature appears at 69–79 (ITPYDATHLGH). The 'ERGGDP' region motif lies at 207–212 (ERGGDP). W247 provides a ligand contact to L-cysteinyl-5'-AMP. A Zn(2+)-binding site is contributed by C251. 269 to 271 (GTD) contributes to the L-cysteinyl-5'-AMP binding site. H276 contributes to the Zn(2+) binding site. V303 contacts L-cysteinyl-5'-AMP. Positions 309–313 (KMSKS) match the 'KMSKS' region motif. The tract at residues 410-435 (AGGSAGAGPDPTHQGGPVRGSGGDVP) is disordered.

The protein belongs to the class-I aminoacyl-tRNA synthetase family. MshC subfamily. Monomer. Requires Zn(2+) as cofactor.

The enzyme catalyses 1D-myo-inositol 2-amino-2-deoxy-alpha-D-glucopyranoside + L-cysteine + ATP = 1D-myo-inositol 2-(L-cysteinylamino)-2-deoxy-alpha-D-glucopyranoside + AMP + diphosphate + H(+). Catalyzes the ATP-dependent condensation of GlcN-Ins and L-cysteine to form L-Cys-GlcN-Ins. The sequence is that of L-cysteine:1D-myo-inositol 2-amino-2-deoxy-alpha-D-glucopyranoside ligase from Frankia casuarinae (strain DSM 45818 / CECT 9043 / HFP020203 / CcI3).